Here is a 274-residue protein sequence, read N- to C-terminus: 2,3,4,5-tetrahydropyridine-2,6-dicarboxylate N-succinyltransferase (274 aa).

Positions 104 and 141 each coordinate substrate.

The protein belongs to the transferase hexapeptide repeat family. Homotrimer.

It is found in the cytoplasm. The enzyme catalyses (S)-2,3,4,5-tetrahydrodipicolinate + succinyl-CoA + H2O = (S)-2-succinylamino-6-oxoheptanedioate + CoA. It participates in amino-acid biosynthesis; L-lysine biosynthesis via DAP pathway; LL-2,6-diaminopimelate from (S)-tetrahydrodipicolinate (succinylase route): step 1/3. The sequence is that of 2,3,4,5-tetrahydropyridine-2,6-dicarboxylate N-succinyltransferase from Serratia proteamaculans (strain 568).